The chain runs to 347 residues: Ribosomal RNA small subunit methyltransferase C (347 aa).

It belongs to the methyltransferase superfamily. RsmC family. Monomer.

The protein localises to the cytoplasm. The enzyme catalyses guanosine(1207) in 16S rRNA + S-adenosyl-L-methionine = N(2)-methylguanosine(1207) in 16S rRNA + S-adenosyl-L-homocysteine + H(+). Its function is as follows. Specifically methylates the guanine in position 1207 of 16S rRNA in the 30S particle. This chain is Ribosomal RNA small subunit methyltransferase C, found in Yersinia enterocolitica serotype O:8 / biotype 1B (strain NCTC 13174 / 8081).